The following is a 288-amino-acid chain: 4-diphosphocytidyl-2-C-methyl-D-erythritol kinase (288 aa).

Residue Lys-13 is part of the active site. Pro-96 to Ser-106 contributes to the ATP binding site. Asp-138 is a catalytic residue.

This sequence belongs to the GHMP kinase family. IspE subfamily.

It catalyses the reaction 4-CDP-2-C-methyl-D-erythritol + ATP = 4-CDP-2-C-methyl-D-erythritol 2-phosphate + ADP + H(+). The protein operates within isoprenoid biosynthesis; isopentenyl diphosphate biosynthesis via DXP pathway; isopentenyl diphosphate from 1-deoxy-D-xylulose 5-phosphate: step 3/6. Its function is as follows. Catalyzes the phosphorylation of the position 2 hydroxy group of 4-diphosphocytidyl-2C-methyl-D-erythritol. The chain is 4-diphosphocytidyl-2-C-methyl-D-erythritol kinase from Aliivibrio salmonicida (strain LFI1238) (Vibrio salmonicida (strain LFI1238)).